Here is a 540-residue protein sequence, read N- to C-terminus: Suppressor of tumorigenicity 7 protein-like (540 aa).

4 consecutive transmembrane segments (helical) span residues 24-44, 68-88, 475-495, and 502-522; these read WSWT…VYVL, FYVA…IFEW, LPFF…LAML, and LMGV…GFFA.

This sequence belongs to the ST7 family.

It is found in the membrane. This is Suppressor of tumorigenicity 7 protein-like (st7l) from Danio rerio (Zebrafish).